We begin with the raw amino-acid sequence, 342 residues long: GTPase Obg (342 aa).

The region spanning 1–159 (MKFLDEAKVY…HWLWLRLKLI (159 aa)) is the Obg domain. The OBG-type G domain maps to 160–327 (ADAGLVGLPN…ALRALMAAMD (168 aa)). GTP-binding positions include 166–173 (GLPNAGKS), 191–195 (FTTLH), 212–215 (DIPG), 279–282 (SKAD), and 308–310 (SAA). Residues Ser-173 and Thr-193 each coordinate Mg(2+).

Belongs to the TRAFAC class OBG-HflX-like GTPase superfamily. OBG GTPase family. Monomer. Requires Mg(2+) as cofactor.

The protein resides in the cytoplasm. An essential GTPase which binds GTP, GDP and possibly (p)ppGpp with moderate affinity, with high nucleotide exchange rates and a fairly low GTP hydrolysis rate. Plays a role in control of the cell cycle, stress response, ribosome biogenesis and in those bacteria that undergo differentiation, in morphogenesis control. The sequence is that of GTPase Obg from Methylobacterium nodulans (strain LMG 21967 / CNCM I-2342 / ORS 2060).